The primary structure comprises 199 residues: Protein p2 (199 aa).

It localises to the host cytoplasm. The protein is Protein p2 of Avena sativa (Oat).